The primary structure comprises 212 residues: uncharacterized protein (212 aa).

This is an uncharacterized protein from Rickettsia prowazekii (strain Madrid E).